The primary structure comprises 420 residues: Exodeoxyribonuclease 7 large subunit (420 aa).

The protein belongs to the XseA family. In terms of assembly, heterooligomer composed of large and small subunits.

It localises to the cytoplasm. It carries out the reaction Exonucleolytic cleavage in either 5'- to 3'- or 3'- to 5'-direction to yield nucleoside 5'-phosphates.. Its function is as follows. Bidirectionally degrades single-stranded DNA into large acid-insoluble oligonucleotides, which are then degraded further into small acid-soluble oligonucleotides. The polypeptide is Exodeoxyribonuclease 7 large subunit (Helicobacter pylori (strain ATCC 700392 / 26695) (Campylobacter pylori)).